The primary structure comprises 334 residues: MKIVFWGTPSFAVPSLERLLREPDCEVLGVVTQPDKRRGRGNQLQPEAVKKVALAHNLPLWQPQRVKKDAATLADLRSLAADFFVVVAYGQILSPEILAMPRLGCINNHASLLPRYRGAAPIQWSLYNGETETGITTMLMDAGMDTGAMLLQRTLVVGLLENAEQVSQRLAELGADLVVETLRQQVVGQLQPIPQDNSQATYAPLIKKEDYGLDWHKSAIALQNQIRGFYPDCQTSLRGQPLKVSATLPLGSAYWSALPPEFQALAPQWTDERFAENHPPGSVIGLAKNLGPIIQTGAGGLLLLQVQPAGKRIQSGWDFVNGARLQIGEQLGLT.

111-114 contributes to the (6S)-5,6,7,8-tetrahydrofolate binding site; it reads SLLP.

Belongs to the Fmt family.

It carries out the reaction L-methionyl-tRNA(fMet) + (6R)-10-formyltetrahydrofolate = N-formyl-L-methionyl-tRNA(fMet) + (6S)-5,6,7,8-tetrahydrofolate + H(+). Functionally, attaches a formyl group to the free amino group of methionyl-tRNA(fMet). The formyl group appears to play a dual role in the initiator identity of N-formylmethionyl-tRNA by promoting its recognition by IF2 and preventing the misappropriation of this tRNA by the elongation apparatus. The polypeptide is Methionyl-tRNA formyltransferase (Cyanothece sp. (strain PCC 7425 / ATCC 29141)).